Consider the following 331-residue polypeptide: Heat-inducible transcription repressor HrcA (331 aa).

Belongs to the HrcA family.

Functionally, negative regulator of class I heat shock genes (grpE-dnaK-dnaJ and groELS operons). Prevents heat-shock induction of these operons. The polypeptide is Heat-inducible transcription repressor HrcA (Synechococcus sp. (strain WH7803)).